Here is a 260-residue protein sequence, read N- to C-terminus: Emerin (260 aa).

Residue methionine 1 is modified to N-acetylmethionine. Positions 1–45 (MDDYAVLSDTELAAVLRQYNIPHGPILGSTRKLYEKKIFEYETQR) constitute an LEM domain. Serine 8 and serine 29 each carry phosphoserine. The interval 46-224 (RRLSPPSSSS…PTAALGQDRQ (179 aa)) is interaction with F-actin. Serine 49 is modified (phosphoserine; by PKA). Serine 54, serine 69, serine 72, serine 88, serine 99, serine 142, serine 143, and serine 144 each carry phosphoserine. At tyrosine 162 the chain carries Phosphotyrosine. The tract at residues 169 to 188 (RPISNVSRSSLGLSYYPRSS) is interaction with CTNNB1. Serine 172, serine 175, and serine 177 each carry phosphoserine. Residues 184-206 (YPRSSTSSVSSSSSSPSSWLTRR) form a disordered region. Over residues 187–201 (SSTSSVSSSSSSPSS) the composition is skewed to low complexity. A helical transmembrane segment spans residues 225-245 (VPLWGQLLLFLAFATFLLFVY).

Interacts with lamins A and C, BANF1, GMCL, BCLAF1 and YTHDC1/YT521. Interacts with TMEM43; the interaction retains emerin in the inner nuclear membrane. Interacts with ACTB, SPTAN1, F-actin, CTNNB1 and beta-tubulin. Interacts with SUN1 and SUN2. Interacts with TMEM201. Interacts with NEMP1.

It is found in the nucleus inner membrane. It localises to the nucleus outer membrane. In terms of biological role, stabilizes and promotes the formation of a nuclear actin cortical network. Stimulates actin polymerization in vitro by binding and stabilizing the pointed end of growing filaments. Inhibits beta-catenin activity by preventing its accumulation in the nucleus. Acts by influencing the nuclear accumulation of beta-catenin through a CRM1-dependent export pathway. Links centrosomes to the nuclear envelope via a microtubule association. Required for proper localization of non-farnesylated prelamin-A/C. Together with NEMP1, contributes to nuclear envelope stiffness in germ cells. In Rattus norvegicus (Rat), this protein is Emerin (Emd).